The sequence spans 336 residues: Protein phosphatase 1 regulatory subunit pprA (336 aa).

Low complexity predominate over residues Met-1–Ser-10. The disordered stretch occupies residues Met-1–Glu-24. Residues Glu-11–Ser-21 show a composition bias toward basic and acidic residues. LRR repeat units follow at residues Pro-26 to Pro-47, Thr-49 to Lys-70, Asn-71 to Lys-92, Glu-93 to Gln-114, Ser-115 to Asp-136, Lys-139 to Val-160, Pro-161 to Val-182, Asn-183 to Ser-204, His-205 to Val-225, Cys-229 to Lys-250, Gln-251 to Pro-272, and Asp-273 to Val-294. In terms of domain architecture, LRRCT spans Asn-306–Asn-336.

It belongs to the SDS22 family.

It localises to the nucleus. Regulatory subunit of protein phosphatase 1. This is Protein phosphatase 1 regulatory subunit pprA (pprA) from Dictyostelium discoideum (Social amoeba).